A 384-amino-acid chain; its full sequence is Guanine nucleotide-binding protein alpha-1 subunit (384 aa).

The segment at 1-22 is disordered; sequence MGSLCSRNKHYSQADDEENTQT. Residue Gly2 is the site of N-myristoyl glycine attachment. Residue Cys5 is the site of S-palmitoyl cysteine attachment. The G-alpha domain maps to 38–384; the sequence is HIQKLLLLGA…RRNLFEAGLL (347 aa). The interval 41-54 is G1 motif; the sequence is KLLLLGAGDSGKST. Asp49, Ser50, Gly51, Lys52, Ser53, Thr54, Asp163, Leu188, Thr194, Gly222, Asn288, Lys289, Asp291, and Ala356 together coordinate GTP. Ser53 contributes to the Mg(2+) binding site. Residues 186 to 194 are G2 motif; that stretch reads DVLFARIRT. A Mg(2+)-binding site is contributed by Thr194. The G3 motif stretch occupies residues 215-224; that stretch reads YRLFDVGGQR. Residues 284–291 form a G4 motif region; the sequence is MLFLNKFD. The tract at residues 354–359 is G5 motif; the sequence is TTALDQ.

Belongs to the G-alpha family. As to quaternary structure, g proteins are composed of 3 units; alpha, beta and gamma. The alpha chain contains the guanine nucleotide binding site. Mg(2+) is required as a cofactor.

Its function is as follows. Guanine nucleotide-binding proteins (G proteins) are involved as modulators or transducers in various transmembrane signaling systems. The protein is Guanine nucleotide-binding protein alpha-1 subunit (GPA1) of Solanum lycopersicum (Tomato).